The chain runs to 941 residues: Heat shock protein 70 homolog (941 aa).

Residues 851–887 (ENQPDIPEDSEDSESEDDTTTSKDSESSEITENLALP) form a disordered region. Residues 856–869 (IPEDSEDSESEDDT) show a composition bias toward acidic residues.

Belongs to the heat shock protein 70 family.

Probable chaperone. This is Heat shock protein 70 homolog from Acanthamoeba polyphaga (Amoeba).